Here is a 574-residue protein sequence, read N- to C-terminus: Lengsin (574 aa).

Disordered stretches follow at residues 1 to 36 (MNDE…KVTK) and 66 to 131 (GNMS…IPTT). The segment covering 11-23 (NTRDEGNETEASR) has biased composition (basic and acidic residues). The segment covering 25 to 36 (SKLRRTRKKVTK) has biased composition (basic residues). Residues 91–131 (NQTTVIKPSPLKTSASAPCSEFNTNSNHADNTWEDTQIPTT) show a composition bias toward polar residues. The region spanning 148 to 242 (NHLQFVRFEA…VICDTFTVTG (95 aa)) is the GS beta-grasp domain. Residues 249–574 (PRYIAKRQLS…ERNKFLEYFI (326 aa)) enclose the GS catalytic domain.

The protein belongs to the glutamine synthetase family. As to quaternary structure, dodecamer. Interacts with BFSP2 and VIM.

In terms of biological role, may act as a component of the cytoskeleton or as a chaperone for the reorganization of intermediate filament proteins during terminal differentiation in the lens. Does not seem to have enzymatic activity. This chain is Lengsin (LGSN), found in Canis lupus familiaris (Dog).